A 179-amino-acid polypeptide reads, in one-letter code: Ubiquitin-conjugating enzyme E2 C (179 aa).

An N-acetylalanine modification is found at Ala-2. The residue at position 3 (Ser-3) is a Phosphoserine. The region spanning 30–175 (PVGKRLQQEL…LQETYSKQVS (146 aa)) is the UBC core domain. The active-site Glycyl thioester intermediate is Cys-114.

This sequence belongs to the ubiquitin-conjugating enzyme family. As to quaternary structure, component of the APC/C complex, composed of at least 14 distinct subunits that assemble into a complex of at least 19 chains with a combined molecular mass of around 1.2 MDa. Within this complex, directly interacts with ANAPC2. Post-translationally, autoubiquitinated by the APC/C complex, leading to its degradation by the proteasome. Its degradation plays a central role in APC/C regulation, allowing cyclin-A accumulation before S phase entry. APC/C substrates inhibit the autoubiquitination of UBE2C/UBCH10 but not its E2 function, hence APC/C remaining active until its substrates have been destroyed.

The enzyme catalyses S-ubiquitinyl-[E1 ubiquitin-activating enzyme]-L-cysteine + [E2 ubiquitin-conjugating enzyme]-L-cysteine = [E1 ubiquitin-activating enzyme]-L-cysteine + S-ubiquitinyl-[E2 ubiquitin-conjugating enzyme]-L-cysteine.. The catalysed reaction is S-ubiquitinyl-[E1 ubiquitin-activating enzyme]-L-cysteine + [acceptor protein]-L-lysine = [E1 ubiquitin-activating enzyme]-L-cysteine + N(6)-monoubiquitinyl-[acceptor protein]-L-lysine.. It participates in protein modification; protein ubiquitination. Its function is as follows. Accepts ubiquitin from the E1 complex and catalyzes its covalent attachment to other proteins. In vitro catalyzes 'Lys-11'- and 'Lys-48'-linked polyubiquitination. Acts as an essential factor of the anaphase promoting complex/cyclosome (APC/C), a cell cycle-regulated ubiquitin ligase that controls progression through mitosis. Acts by initiating 'Lys-11'-linked polyubiquitin chains on APC/C substrates, leading to the degradation of APC/C substrates by the proteasome and promoting mitotic exit. The sequence is that of Ubiquitin-conjugating enzyme E2 C (Ube2c) from Mus musculus (Mouse).